Here is a 194-residue protein sequence, read N- to C-terminus: Imidazoleglycerol-phosphate dehydratase (194 aa).

This sequence belongs to the imidazoleglycerol-phosphate dehydratase family.

The protein resides in the cytoplasm. It catalyses the reaction D-erythro-1-(imidazol-4-yl)glycerol 3-phosphate = 3-(imidazol-4-yl)-2-oxopropyl phosphate + H2O. The protein operates within amino-acid biosynthesis; L-histidine biosynthesis; L-histidine from 5-phospho-alpha-D-ribose 1-diphosphate: step 6/9. The sequence is that of Imidazoleglycerol-phosphate dehydratase from Lactiplantibacillus plantarum (strain ATCC BAA-793 / NCIMB 8826 / WCFS1) (Lactobacillus plantarum).